The following is a 202-amino-acid chain: MPIGVPKVPFRSPGEEDAIWVDVFNRLYRERLLFLGQEVDSEISNQLVGLMVYLSIEDDTRDLYLFINSPGGWVIPGISIYDTMQFVPPDVHTICMGLAASMGSFILVGGEITKRLAFPHARVMIHQPASSFYEAPTGEFILEAEELLKLRETLTRVYVQRTGNPLWVVSEDMERDVFMSAAEAQAHGIVDLVAVENTGDFA.

The Nucleophile role is filled by serine 101. Histidine 126 is an active-site residue.

Belongs to the peptidase S14 family. As to quaternary structure, component of the chloroplastic Clp protease core complex.

It is found in the plastid. It localises to the chloroplast stroma. It catalyses the reaction Hydrolysis of proteins to small peptides in the presence of ATP and magnesium. alpha-casein is the usual test substrate. In the absence of ATP, only oligopeptides shorter than five residues are hydrolyzed (such as succinyl-Leu-Tyr-|-NHMec, and Leu-Tyr-Leu-|-Tyr-Trp, in which cleavage of the -Tyr-|-Leu- and -Tyr-|-Trp bonds also occurs).. In terms of biological role, cleaves peptides in various proteins in a process that requires ATP hydrolysis. Has a chymotrypsin-like activity. Plays a major role in the degradation of misfolded proteins. This Liriodendron tulipifera (Tuliptree) protein is ATP-dependent Clp protease proteolytic subunit.